Consider the following 251-residue polypeptide: Malonyl-[acyl-carrier protein] O-methyltransferase (251 aa).

Belongs to the methyltransferase superfamily.

It carries out the reaction malonyl-[ACP] + S-adenosyl-L-methionine = malonyl-[ACP] methyl ester + S-adenosyl-L-homocysteine. The protein operates within cofactor biosynthesis; biotin biosynthesis. In terms of biological role, converts the free carboxyl group of a malonyl-thioester to its methyl ester by transfer of a methyl group from S-adenosyl-L-methionine (SAM). It allows to synthesize pimeloyl-ACP via the fatty acid synthetic pathway. The sequence is that of Malonyl-[acyl-carrier protein] O-methyltransferase from Erwinia billingiae (strain Eb661).